The primary structure comprises 575 residues: Serine/threonine-protein kinase YPK1 (575 aa).

Residues 1-53 (MMSWKFGKKFKEGGFLSGKHHSSNNNSPSDTSRSTTPTPGNPHPEDAVKPPVP) are disordered. The span at 23–38 (SNNNSPSDTSRSTTPT) shows a compositional bias: low complexity. The 256-residue stretch at 245-500 (FELLKVIGKG…AQDIKNHPFF (256 aa)) folds into the Protein kinase domain. ATP-binding positions include 251 to 259 (IGKGSFGKV) and Lys-274. The Proton acceptor role is filled by Asp-368. An AGC-kinase C-terminal domain is found at 502–573 (KHINFTKLWN…SVSPLGESVG (72 aa)). Residues Ser-543 and Ser-562 each carry the phosphoserine modification.

This sequence belongs to the protein kinase superfamily. AGC Ser/Thr protein kinase family. RAC subfamily.

It catalyses the reaction L-seryl-[protein] + ATP = O-phospho-L-seryl-[protein] + ADP + H(+). It carries out the reaction L-threonyl-[protein] + ATP = O-phospho-L-threonyl-[protein] + ADP + H(+). In terms of biological role, probable serine/threonine-protein kinase which may act in the sphingolipid-mediated signaling pathway. May act downstream of TORC2 (TOR complex 2) and PDK1 to regulate sphingolipid metabolism. The chain is Serine/threonine-protein kinase YPK1 from Cryptococcus neoformans var. grubii serotype A (strain H99 / ATCC 208821 / CBS 10515 / FGSC 9487) (Filobasidiella neoformans var. grubii).